An 828-amino-acid polypeptide reads, in one-letter code: DNA gyrase subunit A (828 aa).

The Topo IIA-type catalytic domain maps to 38 to 501 (LPDARDGLKP…SYESIDTEDL (464 aa)). Y126 (O-(5'-phospho-DNA)-tyrosine intermediate) is an active-site residue. A GyrA-box motif is present at residues 528–534 (QNRGGKG).

Belongs to the type II topoisomerase GyrA/ParC subunit family. As to quaternary structure, heterotetramer, composed of two GyrA and two GyrB chains. In the heterotetramer, GyrA contains the active site tyrosine that forms a transient covalent intermediate with DNA, while GyrB binds cofactors and catalyzes ATP hydrolysis.

The protein resides in the cytoplasm. The catalysed reaction is ATP-dependent breakage, passage and rejoining of double-stranded DNA.. Functionally, a type II topoisomerase that negatively supercoils closed circular double-stranded (ds) DNA in an ATP-dependent manner to modulate DNA topology and maintain chromosomes in an underwound state. Negative supercoiling favors strand separation, and DNA replication, transcription, recombination and repair, all of which involve strand separation. Also able to catalyze the interconversion of other topological isomers of dsDNA rings, including catenanes and knotted rings. Type II topoisomerases break and join 2 DNA strands simultaneously in an ATP-dependent manner. This is DNA gyrase subunit A from Helicobacter pylori (strain J99 / ATCC 700824) (Campylobacter pylori J99).